We begin with the raw amino-acid sequence, 435 residues long: 3-phosphoshikimate 1-carboxyvinyltransferase (435 aa).

Residues lysine 21, serine 22, and arginine 26 each contribute to the 3-phosphoshikimate site. Lysine 21 provides a ligand contact to phosphoenolpyruvate. The phosphoenolpyruvate site is built by glycine 99 and arginine 127. 3-phosphoshikimate-binding residues include serine 173, glutamine 175, aspartate 323, and lysine 350. Glutamine 175 serves as a coordination point for phosphoenolpyruvate. The active-site Proton acceptor is aspartate 323. Phosphoenolpyruvate-binding residues include arginine 354 and arginine 396.

The protein belongs to the EPSP synthase family. As to quaternary structure, monomer.

It localises to the cytoplasm. It carries out the reaction 3-phosphoshikimate + phosphoenolpyruvate = 5-O-(1-carboxyvinyl)-3-phosphoshikimate + phosphate. It functions in the pathway metabolic intermediate biosynthesis; chorismate biosynthesis; chorismate from D-erythrose 4-phosphate and phosphoenolpyruvate: step 6/7. Its function is as follows. Catalyzes the transfer of the enolpyruvyl moiety of phosphoenolpyruvate (PEP) to the 5-hydroxyl of shikimate-3-phosphate (S3P) to produce enolpyruvyl shikimate-3-phosphate and inorganic phosphate. The sequence is that of 3-phosphoshikimate 1-carboxyvinyltransferase from Akkermansia muciniphila (strain ATCC BAA-835 / DSM 22959 / JCM 33894 / BCRC 81048 / CCUG 64013 / CIP 107961 / Muc).